The sequence spans 392 residues: Bifunctional enzyme Fae/Hps (392 aa).

Positions 1 to 161 (MFLVGEALIG…YEKERSVHPV (161 aa)) are formaldehyde-activating enzyme. Residue H17 is the Proton donor of the active site. Substrate-binding residues include D19, L48, K66, T68, and Q83. Residues 162 to 392 (MGYRVMRLWD…IDQYRIMTDF (231 aa)) are 3-hexulose-6-phosphate synthase.

In the N-terminal section; belongs to the formaldehyde-activating enzyme family. It in the C-terminal section; belongs to the HPS/KGPDC family. HPS subfamily.

It carries out the reaction 5,6,7,8-tetrahydromethanopterin + formaldehyde = 5,10-methylenetetrahydromethanopterin + H2O. The enzyme catalyses D-ribulose 5-phosphate + formaldehyde = D-arabino-hex-3-ulose 6-phosphate. The protein operates within carbohydrate biosynthesis; D-ribose 5-phosphate biosynthesis. In terms of biological role, catalyzes the condensation of formaldehyde with tetrahydromethanopterin (H(4)MPT) to 5,10-methylenetetrahydromethanopterin. Catalyzes the reversible formation of ribulose-5-phosphate and formaldehyde from 3-hexulose-6-phosphate. The polypeptide is Bifunctional enzyme Fae/Hps (Methanothrix thermoacetophila (strain DSM 6194 / JCM 14653 / NBRC 101360 / PT) (Methanosaeta thermophila)).